The sequence spans 110 residues: Early E3B 12.7 kDa protein (110 aa).

Positions 1–16 are cleaved as a signal peptide; that stretch reads MKTALVLFFMLIPVWA. A helical transmembrane segment spans residues 37-57; it reads YIGWVYGIMSGLVFVSSVVSL.

It belongs to the adenoviridae E3_14 family. In terms of processing, phosphorylated on serine; O-glycosylated, but not N-glycosylated.

The protein localises to the host membrane. In terms of biological role, down-regulates the EGF receptor and prevents cytolysis by TNF. The polypeptide is Early E3B 12.7 kDa protein (Homo sapiens (Human)).